The sequence spans 331 residues: 6-phosphogluconolactonase (331 aa).

It belongs to the cycloisomerase 2 family.

The enzyme catalyses 6-phospho-D-glucono-1,5-lactone + H2O = 6-phospho-D-gluconate + H(+). It participates in carbohydrate degradation; pentose phosphate pathway; D-ribulose 5-phosphate from D-glucose 6-phosphate (oxidative stage): step 2/3. Catalyzes the hydrolysis of 6-phosphogluconolactone to 6-phosphogluconate. This is 6-phosphogluconolactonase from Salmonella arizonae (strain ATCC BAA-731 / CDC346-86 / RSK2980).